Reading from the N-terminus, the 487-residue chain is Aspyridones efflux protein apdF (487 aa).

Positions 1-21 are enriched in basic and acidic residues; that stretch reads MSSVRESSKDESIVHPPKAPE. A disordered region spans residues 1–25; it reads MSSVRESSKDESIVHPPKAPESEPF. Residues 35–55 form a helical membrane-spanning segment; the sequence is VALGAGGVLFCTFGYVNAFGV. A glycan (N-linked (GlcNAc...) asparagine) is linked at N67. Helical transmembrane passes span 75–95, 99–119, 126–146, 159–179, 191–211, 234–254, 262–282, and 293–313; these read WIGS…GPLF, GAKV…MTSL, FFLA…APAL, AAMG…PIAL, WAVR…VLGI, VATL…FFYL, GMST…SFFG, and IGPY…TFCW. N319 carries an N-linked (GlcNAc...) asparagine glycan. The next 3 membrane-spanning stretches (helical) occupy residues 322–342, 354–374, and 385–405; these read IIVF…ITPA, IGTY…IGPP, and GFLQ…VLAF.

Belongs to the major facilitator superfamily. Monocarboxylate porter (TC 2.A.1.13) family.

It is found in the cell membrane. Efflux pump that may be involved in the secretion of aspyridones. The protein is Aspyridones efflux protein apdF of Emericella nidulans (strain FGSC A4 / ATCC 38163 / CBS 112.46 / NRRL 194 / M139) (Aspergillus nidulans).